The chain runs to 257 residues: Alcohol dehydrogenase 1 (257 aa).

9-33 is a binding site for NAD(+); it reads VFVGGLGFIGYEACKTLITRDLASL. Serine 137 is a substrate binding site. Catalysis depends on tyrosine 150, which acts as the Proton acceptor.

Belongs to the short-chain dehydrogenases/reductases (SDR) family. Homodimer.

The enzyme catalyses a primary alcohol + NAD(+) = an aldehyde + NADH + H(+). The catalysed reaction is a secondary alcohol + NAD(+) = a ketone + NADH + H(+). The polypeptide is Alcohol dehydrogenase 1 (ADH1) (Ceratitis cosyra (Mango fruit fly)).